The following is a 602-amino-acid chain: MKPYKIENIRNFSIIAHIDHGKSTIADRLLESTSTIEQREMREQLLDSMDLERERGITIKAHPVTMTYEYEGETYELNLIDTPGHVDFSYEVSRSLAACEGALLIVDAAQGVQAQSLANVYLALERDLEIIPVLNKIDLPAAQPEAIKKQIEEFIGLDTSNTIACSAKTGQGIPEILESIIRLVPPPKPPQETELKALIFDSHYDPYVGIMVYVRVISGEIKKGDRITFMATKGSSFEVLGIGAFLPEATLMEGSLRAGQVGYFIANLKKVKDVKIGDTVTTVKHPAKEPLEGFKEIKPVVFAGIYPIDSSDFDTLKDALGRLQLNDSALTIEQESSHSLGFGFRCGFLGLLHLEIIFERISREFDLDIIATAPSVIYKVVLKNGKTLFIDNPTAYPDPALIEHMEEPWVHVNIITPQEYLSNIMSLCMDKRGICLKTDMLDQHRLVLSYELPLNEIVSDFNDKLKSVTKGYGSFDYRLGDYKKGAIIKLEILINDEAVDAFSCLVHRDKAESKGRSICEKLVDVIPPQLFKIPIQAAINKKIIARETIRALAKNVTAKCYGGDITRKRKLWDKQKKGKKRMKEFGKVSIPNTAFVAVLKME.

Positions 7–188 (ENIRNFSIIA…SIIRLVPPPK (182 aa)) constitute a tr-type G domain. GTP contacts are provided by residues 19–24 (DHGKST) and 135–138 (NKID).

This sequence belongs to the TRAFAC class translation factor GTPase superfamily. Classic translation factor GTPase family. LepA subfamily.

It is found in the cell inner membrane. It carries out the reaction GTP + H2O = GDP + phosphate + H(+). Required for accurate and efficient protein synthesis under certain stress conditions. May act as a fidelity factor of the translation reaction, by catalyzing a one-codon backward translocation of tRNAs on improperly translocated ribosomes. Back-translocation proceeds from a post-translocation (POST) complex to a pre-translocation (PRE) complex, thus giving elongation factor G a second chance to translocate the tRNAs correctly. Binds to ribosomes in a GTP-dependent manner. In Chlamydia trachomatis serovar A (strain ATCC VR-571B / DSM 19440 / HAR-13), this protein is Elongation factor 4.